Reading from the N-terminus, the 737-residue chain is Transcription termination factor Rho (737 aa).

A disordered region spans residues 1–396; it reads MSGPCSAHRV…ENSYLPDPTD (396 aa). Low complexity-rich tracts occupy residues 16-28, 62-86, and 101-111; these read RPTI…TRSS, ASRA…GSDA, and DAESAPTAADT. Basic and acidic residues-rich tracts occupy residues 145 to 175, 196 to 256, 266 to 279, and 286 to 324; these read PRAE…HESR, SMER…DRRD, GRPD…DRHQ, and DRSH…DRGG. The span at 328-339 shows a compositional bias: basic residues; sequence RNGRRGRNRFRR. Polar residues predominate over residues 347–360; that stretch reads APISGSHAPSQGSP. Positions 367-439 constitute a Rho RNA-BD domain; the sequence is EGTMAGWFDP…IEVQTLNDGS (73 aa). The span at 376–387 shows a compositional bias: basic and acidic residues; the sequence is PSRDGGFLRRPE. ATP is bound by residues 487-492, 499-504, and Arg-530; these read GYGQRA and RAGKTT.

This sequence belongs to the Rho family. As to quaternary structure, homohexamer. The homohexamer assembles into an open ring structure.

In terms of biological role, facilitates transcription termination by a mechanism that involves Rho binding to the nascent RNA, activation of Rho's RNA-dependent ATPase activity, and release of the mRNA from the DNA template. This Gemmatimonas aurantiaca (strain DSM 14586 / JCM 11422 / NBRC 100505 / T-27) protein is Transcription termination factor Rho.